The following is a 487-amino-acid chain: WD repeat, SAM and U-box domain-containing protein 1 (487 aa).

7 WD repeats span residues 10–47 (SHRD…ELPF), 52–93 (GHGY…AVLE), 95–134 (PGRS…LRRT), 137–176 (VNDT…LHAE), 179–227 (AHDL…SAGI), 237–276 (GQSA…LLYT), and 279–318 (QHDR…SAQG). Positions 347–411 (WSEEEVLAWL…MKKIEELKMV (65 aa)) constitute an SAM domain. Residues 416-487 (GTPDEFLCPI…MAIFRWSTSQ (72 aa)) enclose the U-box domain.

The sequence is that of WD repeat, SAM and U-box domain-containing protein 1 (wdsub1) from Danio rerio (Zebrafish).